Reading from the N-terminus, the 254-residue chain is 5'-nucleotidase SurE (254 aa).

The a divalent metal cation site is built by Asp8, Asp9, Ser40, and Asn93.

It belongs to the SurE nucleotidase family. A divalent metal cation serves as cofactor.

Its subcellular location is the cytoplasm. The catalysed reaction is a ribonucleoside 5'-phosphate + H2O = a ribonucleoside + phosphate. Functionally, nucleotidase that shows phosphatase activity on nucleoside 5'-monophosphates. This chain is 5'-nucleotidase SurE, found in Methylobacterium radiotolerans (strain ATCC 27329 / DSM 1819 / JCM 2831 / NBRC 15690 / NCIMB 10815 / 0-1).